The following is a 220-amino-acid chain: Redox-sensing transcriptional repressor Rex (220 aa).

Residues 17–56 (LYARSLRYLLQEGVESVSSQELGDRINVTAAQIRKDLSYF) constitute a DNA-binding region (H-T-H motif). 91-96 (GIGHLG) provides a ligand contact to NAD(+).

The protein belongs to the transcriptional regulatory Rex family. As to quaternary structure, homodimer.

It localises to the cytoplasm. Modulates transcription in response to changes in cellular NADH/NAD(+) redox state. This Roseiflexus sp. (strain RS-1) protein is Redox-sensing transcriptional repressor Rex.